Here is a 440-residue protein sequence, read N- to C-terminus: Glutamyl-tRNA reductase (440 aa).

Substrate-binding positions include 50-53, Ser109, 114-116, and Gln120; these read TCNR and EPQ. Cys51 (nucleophile) is an active-site residue. 189 to 194 provides a ligand contact to NADP(+); sequence GAGEMA.

The protein belongs to the glutamyl-tRNA reductase family. Homodimer.

The catalysed reaction is (S)-4-amino-5-oxopentanoate + tRNA(Glu) + NADP(+) = L-glutamyl-tRNA(Glu) + NADPH + H(+). It functions in the pathway porphyrin-containing compound metabolism; protoporphyrin-IX biosynthesis; 5-aminolevulinate from L-glutamyl-tRNA(Glu): step 1/2. Its function is as follows. Catalyzes the NADPH-dependent reduction of glutamyl-tRNA(Glu) to glutamate 1-semialdehyde (GSA). In Nitratidesulfovibrio vulgaris (strain DP4) (Desulfovibrio vulgaris), this protein is Glutamyl-tRNA reductase.